The following is a 104-amino-acid chain: A-type ATP synthase subunit F (104 aa).

Belongs to the V-ATPase F subunit family. As to quaternary structure, has multiple subunits with at least A(3), B(3), C, D, E, F, H, I and proteolipid K(x).

The protein localises to the cell membrane. Functionally, component of the A-type ATP synthase that produces ATP from ADP in the presence of a proton gradient across the membrane. This chain is A-type ATP synthase subunit F, found in Thermoplasma volcanium (strain ATCC 51530 / DSM 4299 / JCM 9571 / NBRC 15438 / GSS1).